Here is a 20-residue protein sequence, read N- to C-terminus: Dihydroorotase-like protein (20 aa).

It belongs to the metallo-dependent hydrolases superfamily. DHOase family. PyrC' subfamily. Heterododecamer of 6 active PyrB subunits and 6 non-catalytic PyrC' subunits.

Its function is as follows. Non-functional DHOase. The polypeptide is Dihydroorotase-like protein (pyrC') (Pseudomonas fluorescens biotype A).